Reading from the N-terminus, the 125-residue chain is MGFWKFPPFLILSILVLYQAGMLHAAPFRMALGSSFDSATLTEEEMSLLLVAMVKDYVQMKATVLEQETEDFSITTQERSCNTAICVTHKMAGWLSRSGSVVKNNFMPINMGSKVLGRRRRQPQA.

Positions 1–25 (MGFWKFPPFLILSILVLYQAGMLHA) are cleaved as a signal peptide. Positions 26–79 (APFRMALGSSFDSATLTEEEMSLLLVAMVKDYVQMKATVLEQETEDFSITTQER) are excised as a propeptide. A disulfide bond links Cys81 and Cys86. Residue Leu116 is modified to Leucine amide. Residues 122-125 (QPQA) constitute a propeptide that is removed on maturation.

The protein belongs to the calcitonin family. Mainly expressed in the thyroid gland and CNS. Found in the nerve cells of cerebrum, hippocampus, hypothalamus, pons/midbrain and thalamus.

It is found in the secreted. The chain is Calcitonin receptor-stimulating peptide 3 (CRSP3) from Sus scrofa (Pig).